A 252-amino-acid chain; its full sequence is Phosphate import ATP-binding protein PstB (252 aa).

In terms of domain architecture, ABC transporter spans 5–247; that stretch reads LIASDVNIFY…PRDERTEAYV (243 aa). 37–44 provides a ligand contact to ATP; sequence GPSGCGKT.

This sequence belongs to the ABC transporter superfamily. Phosphate importer (TC 3.A.1.7) family. As to quaternary structure, the complex is composed of two ATP-binding proteins (PstB), two transmembrane proteins (PstC and PstA) and a solute-binding protein (PstS).

Its subcellular location is the cell membrane. The catalysed reaction is phosphate(out) + ATP + H2O = ADP + 2 phosphate(in) + H(+). Functionally, part of the ABC transporter complex PstSACB involved in phosphate import. Responsible for energy coupling to the transport system. The chain is Phosphate import ATP-binding protein PstB from Deinococcus geothermalis (strain DSM 11300 / CIP 105573 / AG-3a).